Reading from the N-terminus, the 449-residue chain is Probable multidrug resistance protein NorM (449 aa).

Transmembrane regions (helical) follow at residues Leu17–Ala39, Val54–Ala76, Val97–Leu119, Ala129–Gly151, Val164–Pro186, Gly196–Tyr215, Leu243–Leu265, Met280–Gly302, Leu315–Phe337, Val352–Met369, Met390–Ala412, and Ala417–Tyr439.

Belongs to the multi antimicrobial extrusion (MATE) (TC 2.A.66.1) family.

The protein localises to the cell inner membrane. Multidrug efflux pump. The sequence is that of Probable multidrug resistance protein NorM (norM) from Acinetobacter baylyi (strain ATCC 33305 / BD413 / ADP1).